We begin with the raw amino-acid sequence, 216 residues long: Adenylate kinase (216 aa).

Position 10 to 15 (10 to 15) interacts with ATP; it reads GAGKGT. Positions 30-59 are NMP; it reads STGDIFRKNISENTPLGIEAKGYIDNGQLV. Residues Thr31, Arg36, 57 to 59, 85 to 88, and Gln92 contribute to the AMP site; these read QLV and GFPR. Residues 126–163 form an LID region; it reads GRRVCPSCGASYHVKFNPPTNEGKCDLCGSEVIQRKDD. Arg127 contributes to the ATP binding site. 2 residues coordinate Zn(2+): Cys130 and Cys133. Residue 136-137 coordinates ATP; the sequence is SY. The Zn(2+) site is built by Cys150 and Cys153. Positions 160 and 171 each coordinate AMP. Residue Lys199 participates in ATP binding.

Belongs to the adenylate kinase family. In terms of assembly, monomer.

The protein resides in the cytoplasm. The enzyme catalyses AMP + ATP = 2 ADP. The protein operates within purine metabolism; AMP biosynthesis via salvage pathway; AMP from ADP: step 1/1. Catalyzes the reversible transfer of the terminal phosphate group between ATP and AMP. Plays an important role in cellular energy homeostasis and in adenine nucleotide metabolism. The polypeptide is Adenylate kinase (Clostridium beijerinckii (strain ATCC 51743 / NCIMB 8052) (Clostridium acetobutylicum)).